The sequence spans 56 residues: Mitoregulin (56 aa).

Residues 2–9 (ADVSERTL) lie on the Mitochondrial matrix side of the membrane. Residues 10 to 27 (QLSVLVAFASGVLLGWQA) form a helical membrane-spanning segment. At 28–56 (NRLRRRYLDWRKRRLQDKLAATQKKLDLA) the chain is on the mitochondrial intermembrane side.

As to quaternary structure, interacts with mitochondrial trifunctional enzyme, a heterotetrameric complex composed of 2 HADHA subunits and 2 HADHB subunits. Interacts with cytochrome b5 reductase CYB5R3; the interaction is required to maintain cellular lipid composition and leads to stimulation of mitochondrial respiratory complex I activity. Interacts with ATP synthase subunit ATP5F1B/ATP5B.

It localises to the mitochondrion inner membrane. Its function is as follows. Positively regulates mitochondrial complex assembly and/or stability. Increases mitochondrial membrane potential while decreasing mitochondrial reactive oxygen species. Increases mitochondrial respiration rate. Increased mitochondrial respiratory activity promotes myogenic differentiation which facilitates muscle growth and regeneration. Increases mitochondrial calcium retention capacity. Plays a role in maintenance of cellular lipid composition through its interaction with cytochrome b5 reductase CYB5R3 which is required for mitochondrial respiratory complex I activity. Interacts with the mitochondrial trifunctional enzyme complex (MTE) and enhances fatty acid beta-oxidation. Not required for MTE formation or stability. Modulates triglyceride clearance in adipocytes through its role in regulating fatty acid beta-oxidation and lipolysis. This Homo sapiens (Human) protein is Mitoregulin.